The following is a 431-amino-acid chain: Beclin-2 (431 aa).

Residues 17-74 (LSGSSESRSLPAAPAPTSGQAEPGDTREPGVTTREVTDAEEQQDGASSRSPPGDGSVS) form a disordered region. Positions 125-248 (LLEQLDIQLA…ARVQRDRLKE (124 aa)) form a coiled coil. Positions 173 to 243 (EARLVQELED…NQLQYARVQR (71 aa)) are required for homodimer formation.

It belongs to the beclin family. As to quaternary structure, homodimer (via coiled-coil domain). Interacts (via coiled-coil domain) with ATG14 (via coiled-coil domain); this interaction is tighter than BECN2 self-association. Interacts with AMBRA1, UVRAG and PIK3C3/VPS34; these interactions are not disrupted by starvation. Does not interact with RUBCN. Interacts (via N-terminus) with GPRASP1/GASP1; the interaction is direct. In terms of tissue distribution, present in fetal and adult brain (at protein level).

Its subcellular location is the cytoplasm. Functionally, involved in 2 distinct lysosomal degradation pathways: acts as a regulator of autophagy and as a regulator of G-protein coupled receptors turnover. Regulates degradation in lysosomes of a variety of G-protein coupled receptors via its interaction with GPRASP1/GASP1. In Homo sapiens (Human), this protein is Beclin-2.